The sequence spans 77 residues: Translation initiation factor IF-1, chloroplastic (77 aa).

Residues 1 to 71 form the S1-like domain; it reads MKEQKWIHEG…TRGRIIYRLR (71 aa).

The protein belongs to the IF-1 family. As to quaternary structure, component of the 30S ribosomal translation pre-initiation complex which assembles on the 30S ribosome in the order IF-2 and IF-3, IF-1 and N-formylmethionyl-tRNA(fMet); mRNA recruitment can occur at any time during PIC assembly.

Its subcellular location is the plastid. The protein localises to the chloroplast. In terms of biological role, one of the essential components for the initiation of protein synthesis. Stabilizes the binding of IF-2 and IF-3 on the 30S subunit to which N-formylmethionyl-tRNA(fMet) subsequently binds. Helps modulate mRNA selection, yielding the 30S pre-initiation complex (PIC). Upon addition of the 50S ribosomal subunit IF-1, IF-2 and IF-3 are released leaving the mature 70S translation initiation complex. The sequence is that of Translation initiation factor IF-1, chloroplastic from Nandina domestica (Heavenly bamboo).